Reading from the N-terminus, the 252-residue chain is Ubiquinone biosynthesis O-methyltransferase (252 aa).

S-adenosyl-L-methionine-binding residues include arginine 41, glycine 72, aspartate 93, and methionine 136.

This sequence belongs to the methyltransferase superfamily. UbiG/COQ3 family.

It catalyses the reaction a 3-demethylubiquinol + S-adenosyl-L-methionine = a ubiquinol + S-adenosyl-L-homocysteine + H(+). It carries out the reaction a 3-(all-trans-polyprenyl)benzene-1,2-diol + S-adenosyl-L-methionine = a 2-methoxy-6-(all-trans-polyprenyl)phenol + S-adenosyl-L-homocysteine + H(+). It functions in the pathway cofactor biosynthesis; ubiquinone biosynthesis. Its function is as follows. O-methyltransferase that catalyzes the 2 O-methylation steps in the ubiquinone biosynthetic pathway. The polypeptide is Ubiquinone biosynthesis O-methyltransferase (Rhizobium leguminosarum bv. trifolii (strain WSM2304)).